The primary structure comprises 60 residues: Metallothionein (60 aa).

The tract at residues 1 to 28 is beta; it reads MDPCDCAKTGTCNCGTSCTCANCSCTKC. Residues Cys4, Cys6, Cys12, Cys14, Cys18, Cys20, Cys23, Cys25, Cys28, Cys32, Cys33, Cys35, Cys36, Cys40, Cys43, Cys47, Cys49, Cys54, Cys58, and Cys59 each contribute to the a divalent metal cation site. Positions 29-60 are alpha; the sequence is KKSCCECCPSGCSKCASGCACKDKTCDTNCCQ.

The protein belongs to the metallothionein superfamily. Type 1 family.

In terms of biological role, metallothioneins have a high content of cysteine residues that bind various heavy metals. This chain is Metallothionein (mt), found in Gadus morhua (Atlantic cod).